The sequence spans 521 residues: Beta-glucosidase 6 (521 aa).

The first 38 residues, 1–38, serve as a signal peptide directing secretion; sequence MGRIKSSSGRCSTARLEAVAVLVVVFGVASSSLRGCIA. A beta-D-glucoside contacts are provided by residues Q64, H165, and 210–211; that span reads NE. The Proton donor role is filled by E211. An intrachain disulfide couples C230 to C238. N291 is a glycosylation site (N-linked (GlcNAc...) asparagine). Y354 lines the a beta-D-glucoside pocket. N362 and N372 each carry an N-linked (GlcNAc...) asparagine glycan. Residues E427, W477, 484 to 485, and F493 contribute to the a beta-D-glucoside site; that span reads EW. E427 acts as the Nucleophile in catalysis.

The protein belongs to the glycosyl hydrolase 1 family. In terms of assembly, homodimer.

It localises to the secreted. It carries out the reaction Hydrolysis of terminal, non-reducing beta-D-glucosyl residues with release of beta-D-glucose.. In terms of biological role, hydrolyzes glycosides, oligosaccharides and hydrophobic glycosides. Possesses gibberellin ester beta-D-glucosidase activity. Can hydrolyze gibberellin A4 beta-D-glucosyl ester in vitro. The sequence is that of Beta-glucosidase 6 from Oryza sativa subsp. japonica (Rice).